Here is a 93-residue protein sequence, read N- to C-terminus: Small ribosomal subunit protein uS19 (93 aa).

The protein belongs to the universal ribosomal protein uS19 family.

Functionally, protein S19 forms a complex with S13 that binds strongly to the 16S ribosomal RNA. This chain is Small ribosomal subunit protein uS19, found in Pseudarthrobacter chlorophenolicus (strain ATCC 700700 / DSM 12829 / CIP 107037 / JCM 12360 / KCTC 9906 / NCIMB 13794 / A6) (Arthrobacter chlorophenolicus).